We begin with the raw amino-acid sequence, 287 residues long: tRNA selenocysteine 1-associated protein 1 (287 aa).

RRM domains are found at residues 3-86 (ASLW…YATY) and 96-175 (YSLF…VAIP).

This sequence belongs to the RRM TRSPAP family. Component of the tRNA(Sec) complex composed at least of EEFSEC, SECISBP2, SEPHS1, SEPSECS, TRNAU1AP and tRNA(Sec). Associates with mRNP and/or polysomes. Found in a complex with tRNA(Sec). Interacts with SEPSECS. As to expression, ubiquitous.

The protein localises to the nucleus. The protein resides in the cytoplasm. Its function is as follows. Involved in the early steps of selenocysteine biosynthesis and tRNA(Sec) charging to the later steps resulting in the cotranslational incorporation of selenocysteine into selenoproteins. Stabilizes the SECISBP2, EEFSEC and tRNA(Sec) complex. May be involved in the methylation of tRNA(Sec). Enhances efficiency of selenoproteins synthesis. This Rattus norvegicus (Rat) protein is tRNA selenocysteine 1-associated protein 1 (Trnau1ap).